Reading from the N-terminus, the 207-residue chain is MTKKVMDEQESHKEYLDEILQAGEVQEDTVPLVEWSQGQSSPEGECTEARIAELETELARQKEQAGKYRDELLRRAADFENFRKQKEREAMMASSRALENIIRELLPVIDDVKRLLDHAPLSAERSSEARPYIEGVEMVKKNLEKWLDEKGVKAIASIGTMLDVNFHEAISQIDSPDAEPDMIVDEYQTGYLLGERVIRHAKVIVAR.

Belongs to the GrpE family. As to quaternary structure, homodimer.

The protein localises to the cytoplasm. Participates actively in the response to hyperosmotic and heat shock by preventing the aggregation of stress-denatured proteins, in association with DnaK and GrpE. It is the nucleotide exchange factor for DnaK and may function as a thermosensor. Unfolded proteins bind initially to DnaJ; upon interaction with the DnaJ-bound protein, DnaK hydrolyzes its bound ATP, resulting in the formation of a stable complex. GrpE releases ADP from DnaK; ATP binding to DnaK triggers the release of the substrate protein, thus completing the reaction cycle. Several rounds of ATP-dependent interactions between DnaJ, DnaK and GrpE are required for fully efficient folding. The sequence is that of Protein GrpE from Pelodictyon phaeoclathratiforme (strain DSM 5477 / BU-1).